We begin with the raw amino-acid sequence, 948 residues long: Valine--tRNA ligase (948 aa).

Positions 40 to 50 (PNVTGSLHMGH) match the 'HIGH' region motif. Positions 551–555 (KMSKS) match the 'KMSKS' region motif. Position 554 (Lys554) interacts with ATP. A coiled-coil region spans residues 879–945 (LIDKGAELAR…GKLAEQHARI (67 aa)).

This sequence belongs to the class-I aminoacyl-tRNA synthetase family. ValS type 1 subfamily. As to quaternary structure, monomer.

It localises to the cytoplasm. The catalysed reaction is tRNA(Val) + L-valine + ATP = L-valyl-tRNA(Val) + AMP + diphosphate. Catalyzes the attachment of valine to tRNA(Val). As ValRS can inadvertently accommodate and process structurally similar amino acids such as threonine, to avoid such errors, it has a 'posttransfer' editing activity that hydrolyzes mischarged Thr-tRNA(Val) in a tRNA-dependent manner. The sequence is that of Valine--tRNA ligase from Pseudomonas syringae pv. tomato (strain ATCC BAA-871 / DC3000).